Reading from the N-terminus, the 203-residue chain is Molybdenum cofactor guanylyltransferase (203 aa).

GTP-binding positions include 12 to 14 (LAG), lysine 25, asparagine 53, aspartate 71, and aspartate 101. Mg(2+) is bound at residue aspartate 101.

Belongs to the MobA family. In terms of assembly, monomer. The cofactor is Mg(2+).

The protein localises to the cytoplasm. The catalysed reaction is Mo-molybdopterin + GTP + H(+) = Mo-molybdopterin guanine dinucleotide + diphosphate. In terms of biological role, transfers a GMP moiety from GTP to Mo-molybdopterin (Mo-MPT) cofactor (Moco or molybdenum cofactor) to form Mo-molybdopterin guanine dinucleotide (Mo-MGD) cofactor. The chain is Molybdenum cofactor guanylyltransferase from Methylibium petroleiphilum (strain ATCC BAA-1232 / LMG 22953 / PM1).